The following is a 308-amino-acid chain: Methionyl-tRNA formyltransferase (308 aa).

(6S)-5,6,7,8-tetrahydrofolate is bound at residue 110 to 113; it reads SLLP.

Belongs to the Fmt family.

The enzyme catalyses L-methionyl-tRNA(fMet) + (6R)-10-formyltetrahydrofolate = N-formyl-L-methionyl-tRNA(fMet) + (6S)-5,6,7,8-tetrahydrofolate + H(+). Its function is as follows. Attaches a formyl group to the free amino group of methionyl-tRNA(fMet). The formyl group appears to play a dual role in the initiator identity of N-formylmethionyl-tRNA by promoting its recognition by IF2 and preventing the misappropriation of this tRNA by the elongation apparatus. This Mycobacterium sp. (strain KMS) protein is Methionyl-tRNA formyltransferase.